Here is an 84-residue protein sequence, read N- to C-terminus: Exodeoxyribonuclease 7 small subunit (84 aa).

The protein belongs to the XseB family. Heterooligomer composed of large and small subunits.

It is found in the cytoplasm. It carries out the reaction Exonucleolytic cleavage in either 5'- to 3'- or 3'- to 5'-direction to yield nucleoside 5'-phosphates.. Its function is as follows. Bidirectionally degrades single-stranded DNA into large acid-insoluble oligonucleotides, which are then degraded further into small acid-soluble oligonucleotides. This is Exodeoxyribonuclease 7 small subunit from Haemophilus influenzae (strain ATCC 51907 / DSM 11121 / KW20 / Rd).